The primary structure comprises 501 residues: Microtubule-associated protein mmb1 (501 aa).

Polar residues-rich tracts occupy residues 61–95 (NISS…TNNV), 103–122 (RNPS…SNNA), and 132–168 (HENS…SSNA). 3 disordered regions span residues 61–274 (NISS…VKVN), 328–381 (VSRN…TTGN), and 478–501 (NQTS…NRMI). The span at 234-252 (SSVVRPPTRTSTTRPLSRV) shows a compositional bias: low complexity. Composition is skewed to polar residues over residues 253-274 (NVTN…VKVN), 367-381 (SRIQ…TTGN), and 478-495 (NQTS…SSPL).

The protein resides in the cytoplasm. Its subcellular location is the cytoskeleton. Involved in the cell polarity process and in regulation of microtubule growth. Has a role in meiosis. Involved in microtubule dynamics. Binds to mitochondria and microtubules, attaching the tubular mitochondria to the microtubule lattice at multiple discrete interaction sites. This is Microtubule-associated protein mmb1 from Schizosaccharomyces pombe (strain 972 / ATCC 24843) (Fission yeast).